Here is a 166-residue protein sequence, read N- to C-terminus: Cyclic pyranopterin monophosphate synthase (166 aa).

Substrate is bound by residues 83 to 85 (LCH) and 121 to 122 (ME). Aspartate 136 is an active-site residue.

Belongs to the MoaC family. Homohexamer; trimer of dimers.

The enzyme catalyses (8S)-3',8-cyclo-7,8-dihydroguanosine 5'-triphosphate = cyclic pyranopterin phosphate + diphosphate. Its pathway is cofactor biosynthesis; molybdopterin biosynthesis. Catalyzes the conversion of (8S)-3',8-cyclo-7,8-dihydroguanosine 5'-triphosphate to cyclic pyranopterin monophosphate (cPMP). This chain is Cyclic pyranopterin monophosphate synthase, found in Syntrophobacter fumaroxidans (strain DSM 10017 / MPOB).